A 461-amino-acid polypeptide reads, in one-letter code: Argininosuccinate lyase (461 aa).

It belongs to the lyase 1 family. Argininosuccinate lyase subfamily.

It localises to the cytoplasm. The catalysed reaction is 2-(N(omega)-L-arginino)succinate = fumarate + L-arginine. It participates in amino-acid biosynthesis; L-arginine biosynthesis; L-arginine from L-ornithine and carbamoyl phosphate: step 3/3. Its activity is regulated as follows. Strongly inhibited by L-arginine. Inhibitory effects are lowered at pH 7.0 compared to those at pH 8.0. At 45 degrees Celsius and pH 8.0, activity decreases to 94%, 74% and 37% in the presence of 0.6 mM, 2.8 mM and 10 mM arginine, respectively. Activity also decreases to 86% in the presence of 10 mM sodium succinate or sodium citrate. Activity does not decrease in the presence of 1 mM or 10 mM L-lysine, which has a similar structure to arginine. Its function is as follows. Catalyzes the last step of arginine biosynthesis, the conversion of argininosuccinate into L-arginine and fumarate. The chain is Argininosuccinate lyase from Synechocystis sp. (strain ATCC 27184 / PCC 6803 / Kazusa).